We begin with the raw amino-acid sequence, 484 residues long: Keratin, type I cytoskeletal 14 (484 aa).

Residues 1–20 (MATCSRQFTSSSSMKGSCGI) form a disordered region. Positions 1 to 120 (MATCSRQFTS…GIGDGLLVGS (120 aa)) are head. The coil 1A stretch occupies residues 121-156 (EKVTMQNLNDRLATYLDKVRALEEANTELEVKIRDW). Residues 121–432 (EKVTMQNLND…RLLEGEDAHL (312 aa)) enclose the IF rod domain. Positions 157–174 (YQRQRPTEIKDYSPYFKT) are linker 1. The tract at residues 175 to 266 (IEDLKSKILA…KNHEEEMASM (92 aa)) is coil 1B. Residues 267-289 (RGQVGGDVNVEMDAAPGVDLSRI) are linker 12. Residues 290–428 (LNEMRDQYEK…ATYRRLLEGE (139 aa)) form a coil 2 region. The tail stretch occupies residues 429–484 (DAHLSSSQFSSSSQFSSGSQSSRDVTSTNRQIRTKVMDVHDGKVVSTHEQVLRTKN). Residues 431 to 484 (HLSSSQFSSSSQFSSGSQSSRDVTSTNRQIRTKVMDVHDGKVVSTHEQVLRTKN) are interaction with Type I keratins and keratin filaments. Residues 435 to 450 (SQFSSSSQFSSGSQSS) show a composition bias toward low complexity. Residues 435-457 (SQFSSSSQFSSGSQSSRDVTSTN) are disordered. Residue serine 447 is modified to Phosphoserine.

The protein belongs to the intermediate filament family. In terms of assembly, heterotetramer of two type I and two type II keratins. Forms a disulfide-linked heterodimer (via 2B domains) with KRT5 (via 2B domains). Forms a heterodimer with KRT1; the interaction is more abundant in the absence of KRT5. Interacts with PLEC isoform 1C, when in a heterodimer with KRT5. Interacts with TRADD and with keratin filaments. Associates with other type I keratins. Interacts with EPPK1. Interacts with KLHL24. Interacts with PKP1 (via N-terminus) and PKP2. A disulfide bond is formed between rather than within filaments and promotes the formation of a keratin filament cage around the nucleus. Post-translationally, ubiquitinated by the BCR(KLHL24) E3 ubiquitin ligase complex. As to expression, expressed in the corneal epithelium (at protein level). Expressed in the basal layer of the epidermis and the outer root sheath of hair follicles (at protein level). Expressed in the epithelial basal layer in the tail epidermis. Expressed in the parabasal cell row, basal cell layer, and suprabasal epithelial layer of the tongue.

It is found in the cytoplasm. The protein resides in the nucleus. Its function is as follows. The nonhelical tail domain is involved in promoting KRT5-KRT14 filaments to self-organize into large bundles and enhances the mechanical properties involved in resilience of keratin intermediate filaments in vitro. This is Keratin, type I cytoskeletal 14 (Krt14) from Mus musculus (Mouse).